Here is an 884-residue protein sequence, read N- to C-terminus: Microsomal triglyceride transfer protein large subunit (884 aa).

The first 21 residues, 1–21 (MMPVAGLLLCVTAVLCTSALG), serve as a signal peptide directing secretion. The 635-residue stretch at 26-660 (LDNGKLYRYS…QSNNALLHGL (635 aa)) folds into the Vitellogenin domain. The cysteines at positions 172 and 192 are disulfide-linked. The N-linked (GlcNAc...) asparagine glycan is linked to asparagine 348. An intrachain disulfide couples cysteine 438 to cysteine 443. N-linked (GlcNAc...) asparagine glycosylation is present at asparagine 787.

In terms of assembly, heterodimer; heterodimerizes with the protein disulfide isomerase. Highest expression in the proximal part of the anterior intestine. Lower expression in the distal part of the anterior intestine, in the posterior portion of the intestinal tube and liver. Very low expression levels in heart, brain, ovary, testis and kidney.

The protein resides in the endoplasmic reticulum. Its subcellular location is the golgi apparatus. The catalysed reaction is a 1,2-diacyl-sn-glycero-3-phosphocholine(in) = a 1,2-diacyl-sn-glycero-3-phosphocholine(out). The enzyme catalyses a 1,2-diacyl-sn-glycero-3-phosphoethanolamine(in) = a 1,2-diacyl-sn-glycero-3-phosphoethanolamine(out). It catalyses the reaction a cholesterol ester(in) = a cholesterol ester(out). It carries out the reaction a triacyl-sn-glycerol(in) = a triacyl-sn-glycerol(out). Its activity is regulated as follows. Inhibited by naringenin. Functionally, catalyzes the transport of triglyceride between phospholipid surfaces. Catalyzes the transport of cholesteryl ester, and phospholipid between phospholipid surfaces. Required for the assembly and secretion of plasma lipoproteins that contain apolipoprotein B. Required for yolk lipid utilization and absorption of dietary lipids in larvae. This Danio rerio (Zebrafish) protein is Microsomal triglyceride transfer protein large subunit.